The following is a 128-amino-acid chain: MALQVRVAPSKVVLQKFLLCVILFYTVYYVSLSMGCVMFEVHELNVLAPFDFKTNPSWLNINYKVLLVSTEVTYFVCGLFFVPVVEEWVWDYAISVTILHVAITSTVMLEFPLTSHWWAALGISKLLV.

The next 3 helical transmembrane spans lie at 17 to 37, 65 to 85, and 93 to 113; these read FLLCVILFYTVYYVSLSMGCV, VLLVSTEVTYFVCGLFFVPVV, and AISVTILHVAITSTVMLEFPL.

It is found in the membrane. The polypeptide is Putative transmembrane protein 244 (TMEM244) (Homo sapiens (Human)).